The sequence spans 144 residues: MNFKYIVAVSFLIASAYARSVKNDEQSLSQRDVLDEESLREIRGIGGALLSAGKSALKGLAKGLAEHFANGKRTAEDHEVMKRLEAVMRDLDSLDHPEEASERETRGFNQEEIANRFTKKEKRILGPVLGLVSNALGGLLKNLG.

A signal peptide spans methionine 1–alanine 18. The propeptide occupies arginine 19–arginine 43. Asparagine 70 is subject to Asparagine amide. Positions threonine 74–arginine 123 are excised as a propeptide. Leucine amide is present on leucine 143.

Belongs to the bombinin family. As to expression, expressed by the skin glands.

It is found in the secreted. Maximin-6 shows antimicrobial activity against bacteria and against the fungus C.albicans. It has little hemolytic activity. Functionally, maximin-H10 shows antimicrobial activity against bacteria and against the fungus C.albicans. Shows strong hemolytic activity. This chain is Maximins 6/H10, found in Bombina maxima (Giant fire-bellied toad).